The following is an 803-amino-acid chain: Exo-1,4-beta-xylosidase xlnD (803 aa).

Residues 1 to 18 form the signal peptide; sequence MRSLISVAVLSALPTAFS. N-linked (GlcNAc...) asparagine glycosylation is found at Asn-21, Asn-44, Asn-85, Asn-122, Asn-140, and Asn-234. Residue Asp-307 is part of the active site. Asn-437, Asn-474, Asn-515, Asn-611, Asn-676, and Asn-698 each carry an N-linked (GlcNAc...) asparagine glycan.

This sequence belongs to the glycosyl hydrolase 3 family.

It localises to the secreted. It carries out the reaction Hydrolysis of (1-&gt;4)-beta-D-xylans, to remove successive D-xylose residues from the non-reducing termini.. The protein operates within glycan degradation; xylan degradation. Functionally, xylan 1,4-beta-xylosidase involved in the hydrolysis of xylan, a major structural heterogeneous polysaccharide found in plant biomass representing the second most abundant polysaccharide in the biosphere, after cellulose. This is Exo-1,4-beta-xylosidase xlnD (xlnD) from Emericella nidulans (strain FGSC A4 / ATCC 38163 / CBS 112.46 / NRRL 194 / M139) (Aspergillus nidulans).